Consider the following 473-residue polypeptide: Cysteine--tRNA ligase (473 aa).

Residue cysteine 29 coordinates Zn(2+). The 'HIGH' region motif lies at proline 31 to asparagine 41. Residues cysteine 225, histidine 250, and glutamate 254 each contribute to the Zn(2+) site. A 'KMSKS' region motif is present at residues lysine 281 to serine 285. Residue lysine 284 coordinates ATP.

This sequence belongs to the class-I aminoacyl-tRNA synthetase family. As to quaternary structure, monomer. Requires Zn(2+) as cofactor.

Its subcellular location is the cytoplasm. It carries out the reaction tRNA(Cys) + L-cysteine + ATP = L-cysteinyl-tRNA(Cys) + AMP + diphosphate. The chain is Cysteine--tRNA ligase from Roseobacter denitrificans (strain ATCC 33942 / OCh 114) (Erythrobacter sp. (strain OCh 114)).